Consider the following 156-residue polypeptide: Small ribosomal subunit protein uS7 (156 aa).

Belongs to the universal ribosomal protein uS7 family. As to quaternary structure, part of the 30S ribosomal subunit. Contacts proteins S9 and S11.

Functionally, one of the primary rRNA binding proteins, it binds directly to 16S rRNA where it nucleates assembly of the head domain of the 30S subunit. Is located at the subunit interface close to the decoding center, probably blocks exit of the E-site tRNA. The sequence is that of Small ribosomal subunit protein uS7 from Lactobacillus acidophilus (strain ATCC 700396 / NCK56 / N2 / NCFM).